The sequence spans 760 residues: MOXD1 homolog 2 (760 aa).

The disordered stretch occupies residues 1–34 (MAHPRKAVATPATLQLGPPAQTAQSPAATLRHSR). The segment covering 18 to 34 (PPAQTAQSPAATLRHSR) has biased composition (low complexity). A helical membrane pass occupies residues 47–67 (CFISCHTFNLFLLLLLLASGV). 3 N-linked (GlcNAc...) asparagine glycosylation sites follow: Asn-78, Asn-198, and Asn-223. The region spanning 117–233 (DDFRILWQII…DTMRLLYMYH (117 aa)) is the DOMON domain. 3 cysteine pairs are disulfide-bonded: Cys-339–Cys-367, Cys-467–Cys-581, and Cys-543–Cys-565. Asn-668 carries an N-linked (GlcNAc...) asparagine glycan. The segment at 678–701 (RCKPKRPLAPPTERTAPPPASDLS) is disordered. Residues 740-760 (FISCLLWLGASSWWLLLMLRT) form a helical membrane-spanning segment.

Belongs to the copper type II ascorbate-dependent monooxygenase family.

Its subcellular location is the membrane. The sequence is that of MOXD1 homolog 2 (olf413) from Drosophila melanogaster (Fruit fly).